We begin with the raw amino-acid sequence, 192 residues long: MLGLRLIVGLGNPGSEYIKTRHNAGFRFVDGLVQREGQCWALESKLFAYVARVFIAGQWVWLLRPVTFMNLSGKSIFAGLNFWKIKPEQMLVAHDELDFPPGAVRLKFDGGHGGQNGLRDITKLLGHGRFHRLRVGIGHPGHKERVVSWVLGCPTCDENIAIDAALERASVVLPLAVAGDFDGAMKKLHTVV.

Tyr-17 serves as a coordination point for tRNA. The active-site Proton acceptor is the His-22. Phe-68, Asn-70, and Asn-116 together coordinate tRNA.

This sequence belongs to the PTH family. As to quaternary structure, monomer.

The protein resides in the cytoplasm. The enzyme catalyses an N-acyl-L-alpha-aminoacyl-tRNA + H2O = an N-acyl-L-amino acid + a tRNA + H(+). Its function is as follows. Hydrolyzes ribosome-free peptidyl-tRNAs (with 1 or more amino acids incorporated), which drop off the ribosome during protein synthesis, or as a result of ribosome stalling. In terms of biological role, catalyzes the release of premature peptidyl moieties from peptidyl-tRNA molecules trapped in stalled 50S ribosomal subunits, and thus maintains levels of free tRNAs and 50S ribosomes. The protein is Peptidyl-tRNA hydrolase of Xylella fastidiosa (strain M12).